We begin with the raw amino-acid sequence, 93 residues long: Small ribosomal subunit protein uS19 (93 aa).

Belongs to the universal ribosomal protein uS19 family.

In terms of biological role, protein S19 forms a complex with S13 that binds strongly to the 16S ribosomal RNA. This Leptospira borgpetersenii serovar Hardjo-bovis (strain JB197) protein is Small ribosomal subunit protein uS19.